The following is a 449-amino-acid chain: Zinc finger and BTB domain-containing protein 14 (449 aa).

One can recognise a BTB domain in the interval 36 to 102; it reads CDIAIVVEDV…MYTAKISVKK (67 aa). Residue lysine 46 forms a Glycyl lysine isopeptide (Lys-Gly) (interchain with G-Cter in SUMO2) linkage. The short motif at 50–66 is the Nuclear localization signal element; the sequence is HRCVLAACSTYFKKLFK. Positions 156 to 194 are disordered; it reads ADAQDDDVEEIGDQDDSPSDDTVEGTPPSQEDGKSPTTT. Positions 157-178 are enriched in acidic residues; sequence DAQDDDVEEIGDQDDSPSDDTV. Residues lysine 203 and lysine 249 each participate in a glycyl lysine isopeptide (Lys-Gly) (interchain with G-Cter in SUMO2) cross-link. C2H2-type zinc fingers lie at residues 277-304, 305-332, 333-360, 361-388, and 389-417; these read IACQ…ADRP, FVCE…GYKP, YSCE…NERP, FACH…GEKP, and FVCG…ERKQ. Basic and acidic residues predominate over residues 405-417; the sequence is KRHENNMHSERKQ. Positions 405–424 are disordered; sequence KRHENNMHSERKQVTPSAIQ.

This sequence belongs to the krueppel C2H2-type zinc-finger protein family. As to quaternary structure, interacts with ZBTB21. As to expression, ubiquitous.

The protein resides in the nucleus. Functionally, transcriptional activator of the dopamine transporter (DAT), binding it's promoter at the consensus sequence 5'-CCTGCACAGTTCACGGA-3'. Binds to 5'-d(GCC)(n)-3' trinucleotide repeats in promoter regions and acts as a repressor of the FMR1 gene. Transcriptional repressor of MYC and thymidine kinase promoters. This Mus musculus (Mouse) protein is Zinc finger and BTB domain-containing protein 14 (Zbtb14).